The chain runs to 125 residues: Cytochrome c' (125 aa).

Heme c is bound by residues Arg10, Glu67, Cys116, Cys119, and His120.

As to quaternary structure, homodimer. In terms of processing, binds 1 heme c group covalently per subunit.

Cytochrome c' is the most widely occurring bacterial c-type cytochrome. Cytochromes c' are high-spin proteins and the heme has no sixth ligand. Their exact function is not known. The sequence is that of Cytochrome c' from Pararhodospirillum photometricum (Rhodospirillum photometricum).